The sequence spans 362 residues: Mortality factor 4-like protein 1 (362 aa).

The Tudor-knot domain occupies 12–51 (QEGERVLCFHGPLLYEAKCVKVAIKDKQVKYFIHYSGWNK). Positions 26 to 62 (YEAKCVKVAIKDKQVKYFIHYSGWNKKSAVRPRRSEK) are interaction with KAT8. The interval 113 to 182 (RELQKANQEQ…RKKRARVDPT (70 aa)) is disordered. Residues 133-266 (PGKKTSGLQQ…VAGIKEYFNV (134 aa)) are sufficient for interaction with SIN3A. The Nuclear localization signal signature appears at 135–146 (KKTSGLQQKNVE). N6-acetyllysine is present on K143. Residues 164-230 (STSETPQPPR…FYLPAKKNVD (67 aa)) form an interaction with RB1-1 region. The interval 188–342 (TFMNRVEVKV…FLKYLAKNSA (155 aa)) is sufficient for interaction with PHF12. The MRG domain occupies 191–362 (NRVEVKVKIP…APPEYHRKAV (172 aa)). Residues 323–344 (LALLLNYLHDFLKYLAKNSATL) form an interaction with RB1-2 region.

As to quaternary structure, component of the NuA4 histone acetyltransferase complex which contains the catalytic subunit KAT5/TIP60 and the subunits EP400, TRRAP/PAF400, BRD8/SMAP, EPC1, DMAP1/DNMAP1, RUVBL1/TIP49, RUVBL2, ING3, actin, ACTL6A/BAF53A, MORF4L1/MRG15, MORF4L2/MRGX, MRGBP, YEATS4/GAS41, VPS72/YL1 and MEAF6. The NuA4 complex interacts with MYC and the adenovirus E1A protein. MORF4L1 may also participate in the formation of NuA4 related complexes which lack the KAT5/TIP60 catalytic subunit, but which include the SWI/SNF related protein SRCAP. Component of the mSin3A histone deacetylase complex, which includes SIN3A, HDAC2, ARID4B, MORF4L1, RBBP4/RbAp48, and RBBP7/RbAp46. May also interact with PHF12 and one or more as yet undefined members of the TLE (transducin-like enhancer of split) family of transcriptional repressors. Component of the SIN3B complex, which includes SIN3B, HDAC2 or HDAC1, PHF12 and MORF4L1. Interacts with RB1 and KAT8. Interacts with the N-terminus of MRFAP1. Found in a complex composed of MORF4L1, MRFAP1 and RB1. Interacts with the entire BRCA complex, which contains BRCA1, PALB2, BRCA2 and RAD51. Interacts with PALB2. Forms a complex with MSL1 and NUPR1.

It localises to the nucleus. Functionally, component of the NuA4 histone acetyltransferase (HAT) complex which is involved in transcriptional activation of select genes principally by acetylation of nucleosomal histones H4 and H2A. This modification may both alter nucleosome - DNA interactions and promote interaction of the modified histones with other proteins which positively regulate transcription. This complex may be required for the activation of transcriptional programs associated with oncogene and proto-oncogene mediated growth induction, tumor suppressor mediated growth arrest and replicative senescence, apoptosis, and DNA repair. The NuA4 complex ATPase and helicase activities seem to be, at least in part, contributed by the association of RUVBL1 and RUVBL2 with EP400. NuA4 may also play a direct role in DNA repair when directly recruited to sites of DNA damage. As part of the SIN3B complex represses transcription and counteracts the histone acetyltransferase activity of EP300 through the recognition H3K27ac marks by PHF12 and the activity of the histone deacetylase HDAC2. SIN3B complex is recruited downstream of the constitutively active genes transcriptional start sites through interaction with histones and mitigates histone acetylation and RNA polymerase II progression within transcribed regions contributing to the regulation of transcription. Required for homologous recombination repair (HRR) and resistance to mitomycin C (MMC). Involved in the localization of PALB2, BRCA2 and RAD51, but not BRCA1, to DNA-damage foci. This Homo sapiens (Human) protein is Mortality factor 4-like protein 1.